The primary structure comprises 837 residues: Protein translocase subunit SecA (837 aa).

Residues Gln85, 103-107 (GEGKT), and Asp493 contribute to the ATP site. The Zn(2+) site is built by Cys821, Cys823, Cys832, and His833.

It belongs to the SecA family. In terms of assembly, monomer and homodimer. Part of the essential Sec protein translocation apparatus which comprises SecA, SecYEG and auxiliary proteins SecDF. Other proteins may also be involved. It depends on Zn(2+) as a cofactor.

The protein localises to the cell membrane. Its subcellular location is the cytoplasm. The enzyme catalyses ATP + H2O + cellular proteinSide 1 = ADP + phosphate + cellular proteinSide 2.. Functionally, part of the Sec protein translocase complex. Interacts with the SecYEG preprotein conducting channel. Has a central role in coupling the hydrolysis of ATP to the transfer of proteins into and across the cell membrane, serving as an ATP-driven molecular motor driving the stepwise translocation of polypeptide chains across the membrane. This is Protein translocase subunit SecA from Streptococcus pneumoniae (strain P1031).